Reading from the N-terminus, the 833-residue chain is Leucine--tRNA ligase (833 aa).

The 'HIGH' region motif lies at 41–52 (PYPSGAGLHVGH). A 'KMSKS' region motif is present at residues 610 to 614 (KMSKS). Lys-613 is an ATP binding site.

This sequence belongs to the class-I aminoacyl-tRNA synthetase family.

The protein resides in the cytoplasm. It catalyses the reaction tRNA(Leu) + L-leucine + ATP = L-leucyl-tRNA(Leu) + AMP + diphosphate. This Streptococcus pyogenes serotype M18 (strain MGAS8232) protein is Leucine--tRNA ligase.